A 267-amino-acid polypeptide reads, in one-letter code: Short chain dehydrogenase claC (267 aa).

Positions 27, 73, 100, and 133 each coordinate NADP(+). Active-site proton donor residues include S149 and S150. The NADP(+) site is built by Y164, K168, and T199. Residue Y164 is the Proton acceptor of the active site. Residue K168 is the Lowers pKa of active site Tyr of the active site.

Belongs to the short-chain dehydrogenases/reductases (SDR) family.

Its pathway is pigment biosynthesis. Functionally, non-reducing polyketide synthase; part of the gene cluster that mediates the biosynthesis of the bianthraquinone cladofulvin, a conidial pigment not required for virulence but that plays a role in fitness and resistance to environmental stresses including UV light and low-temperature stress. The pathway begins with the synthesis of atrochrysone thioester by the polyketide synthase (PKS) claG. The atrochrysone carboxyl ACP thioesterase claF then breaks the thioester bond and releases the atrochrysone carboxylic acid from claG. This compound is decarboxylated by claH to yield emodin, which is further converted to chrysophanol hydroquinone by the reductase claC and the dehydratase claB. The cytochrome monooxygenase P450 claM then catalyzes the dimerization of nataloe-emodin to cladofulvin. This is Short chain dehydrogenase claC from Passalora fulva (Tomato leaf mold).